Here is a 104-residue protein sequence, read N- to C-terminus: Ribonuclease P protein component 4 (104 aa).

Positions 63, 66, 89, and 92 each coordinate Zn(2+).

It belongs to the eukaryotic/archaeal RNase P protein component 4 family. As to quaternary structure, consists of a catalytic RNA component and at least 4-5 protein subunits. Zn(2+) serves as cofactor.

The protein resides in the cytoplasm. It carries out the reaction Endonucleolytic cleavage of RNA, removing 5'-extranucleotides from tRNA precursor.. Functionally, part of ribonuclease P, a protein complex that generates mature tRNA molecules by cleaving their 5'-ends. The polypeptide is Ribonuclease P protein component 4 (Methanoregula boonei (strain DSM 21154 / JCM 14090 / 6A8)).